The following is a 354-amino-acid chain: Ornithine carbamoyltransferase, catabolic (354 aa).

Carbamoyl phosphate is bound by residues 67–70 (STRT), Gln94, Arg118, and 145–148 (HPTQ). L-ornithine is bound by residues Asn177, Asp241, and 245–246 (SM). Residues 284 to 285 (CL) and Arg329 contribute to the carbamoyl phosphate site.

Belongs to the aspartate/ornithine carbamoyltransferase superfamily. OTCase family.

The protein resides in the cytoplasm. The catalysed reaction is carbamoyl phosphate + L-ornithine = L-citrulline + phosphate + H(+). The protein operates within amino-acid degradation; L-arginine degradation via ADI pathway; carbamoyl phosphate from L-arginine: step 2/2. Its function is as follows. Reversibly catalyzes the transfer of the carbamoyl group from carbamoyl phosphate (CP) to the N(epsilon) atom of ornithine (ORN) to produce L-citrulline. In Lactococcus lactis subsp. lactis (strain IL1403) (Streptococcus lactis), this protein is Ornithine carbamoyltransferase, catabolic (arcB).